The chain runs to 357 residues: MQIIHEDPKEGKVKVKAETLDDLWHLYHIIDEGDVVYAKTLRKQSQRSDSLRAEKVEVIPVFLGVRAEKINFHKFANQVRVTGPIVYASREDVPLGKYHTIAIEEGTVVTIQKPRWKEHHIERLREAVSASKRARVMIVVIDDGEADMALVREYGVEILTSIRHNLGGKRYNTDREAEEKRFFHDVAKTMEEIMNREKVEKAIVAGPGFVKEDFYKFLRENYPELVKKVVIEDTSVTGRTGIYEVIKRGTVDRVYHENRVAKEVQLIEKVLENIAKNNGLVAYGLREVEEAANYGAVETLLVLDELLKGEMREKIEELMDAVRYSRGEVVIVSSEHEGGEKLKALGGLAALLRFRVK.

It belongs to the eukaryotic release factor 1 family. Pelota subfamily. In terms of assembly, monomer. It depends on a divalent metal cation as a cofactor.

The protein localises to the cytoplasm. In terms of biological role, may function in recognizing stalled ribosomes, interact with stem-loop structures in stalled mRNA molecules, and effect endonucleolytic cleavage of the mRNA. May play a role in the release non-functional ribosomes and degradation of damaged mRNAs. Has endoribonuclease activity. The protein is Protein pelota homolog of Thermococcus onnurineus (strain NA1).